The chain runs to 640 residues: MPAITLPDGSVKAFDHPVTTREIAESIGRKLAKDAIVGRVDGELIDLDRPIEHDAYVEIVTSNDPDGLEVIRHSTAHLMAQAVKQLHPEMQVTIGPTVDNGFYYDFAGERSLSEDELETIEQRMSELAEADHPVEREVWDREAARQFFLEQGETYKAQIIDDLPESETITVYRQGDFADLCRGPHVPSTGKLKAFKLTKVAGAYWRGDQNNEMLQRVYGTAWPDRKQLKAYLDRLAEAERRDHRRLGRTQDLFHVQEESPGMVFWHPRGWRLYLEVQDYIRRLMRDNGYQEIHTPMLVDRSLWERSGHWAMFAENMFVTESESRDYAVKPMNCPCHVEVFKQGLKSYRDLPLRLAEFGSCHRNEPSGTLHGLMRVRGFVQDDAHIFCTENQIQEEVRTFIDLVYRAYRDFGFEDVLIALSTRPDERVGDDALWDKAESALATALETHGLDYTLQPGEGAFYGPKIEFSLRDCLERVWQLGTIQVDFSMPGRLGAQFVDDDGERRTPVMLHRAILGSLERFIGILIEHYGGALPTWLAPVQAVVLNITDRQADYARSVEQQLLESGFRAEADLRNEKIGYKIREHTLQKVPYMLVLGDRELESGTVAVRHRDGTDLGSMELEELVARLSNDIAGHEREQED.

The 61-residue stretch at 1 to 61 folds into the TGS domain; that stretch reads MPAITLPDGS…EHDAYVEIVT (61 aa). The tract at residues 242-533 is catalytic; it reads DHRRLGRTQD…LIEHYGGALP (292 aa). Residues C333, H384, and H510 each contribute to the Zn(2+) site.

It belongs to the class-II aminoacyl-tRNA synthetase family. Homodimer. Zn(2+) serves as cofactor.

It is found in the cytoplasm. The catalysed reaction is tRNA(Thr) + L-threonine + ATP = L-threonyl-tRNA(Thr) + AMP + diphosphate + H(+). Its function is as follows. Catalyzes the attachment of threonine to tRNA(Thr) in a two-step reaction: L-threonine is first activated by ATP to form Thr-AMP and then transferred to the acceptor end of tRNA(Thr). Also edits incorrectly charged L-seryl-tRNA(Thr). The sequence is that of Threonine--tRNA ligase from Halorhodospira halophila (strain DSM 244 / SL1) (Ectothiorhodospira halophila (strain DSM 244 / SL1)).